Here is a 350-residue protein sequence, read N- to C-terminus: Secreted effector protein PipB2 (350 aa).

4 consecutive Pentapeptide repeat domains span residues 162-201 (ANLT…NLSG), 202-241 (TSLG…SLLG), 247-286 (CNCS…IMED), and 287-326 (AVLT…TLTH).

Interacts with the host kinesin light chain (KLC), a subunit of the kinesin-1 motor complex.

Its subcellular location is the secreted. It is found in the host membrane. Its function is as follows. Effector proteins function to alter host cell physiology and promote bacterial survival in host tissues. Involved in the reorganization of late endosome/lysosome (LE/Lys) compartments in mammalian cells. Necessary and sufficient to link kinesin-1 onto the Salmonella-containing vacuole (SCV) membrane. Required for centrifugal extension of lysosomal glycoprotein-rich membrane tubules, known as Salmonella-induced filaments (Sifs), away from the SCV and toward the cell periphery. Required for virulence, but not for intracellular survival and replication in phagocytic cells. The polypeptide is Secreted effector protein PipB2 (pipB2) (Salmonella choleraesuis (strain SC-B67)).